The chain runs to 437 residues: 3-ketoacyl-CoA thiolase (437 aa).

Cys-99 acts as the Acyl-thioester intermediate in catalysis. Catalysis depends on proton acceptor residues His-392 and Cys-422.

It belongs to the thiolase-like superfamily. Thiolase family. Heterotetramer of two alpha chains (FadJ) and two beta chains (FadI).

Its subcellular location is the cytoplasm. The catalysed reaction is an acyl-CoA + acetyl-CoA = a 3-oxoacyl-CoA + CoA. It functions in the pathway lipid metabolism; fatty acid beta-oxidation. Catalyzes the final step of fatty acid oxidation in which acetyl-CoA is released and the CoA ester of a fatty acid two carbons shorter is formed. In Pectobacterium carotovorum subsp. carotovorum (strain PC1), this protein is 3-ketoacyl-CoA thiolase.